Reading from the N-terminus, the 82-residue chain is Cytochrome c-551 (82 aa).

4 residues coordinate heme c: C12, C15, H16, and M61.

In terms of processing, binds 1 heme c group covalently per subunit.

In terms of biological role, this is a prokaryotic monoheme cytochrome, unreactive with mitochondrial cytochrome C oxidase or reductase. It functions in nitrite and nitrate respiration in Pseudomonas, but it is also found in other bacteria. The chain is Cytochrome c-551 from Pseudomonas denitrificans.